The primary structure comprises 238 residues: Octanoyltransferase (238 aa).

A BPL/LPL catalytic domain is found at 40–220; that stretch reads AGGSDALLLL…RVCDALDGRL (181 aa). Substrate-binding positions include 78–85, 150–152, and 163–165; these read RGGKITWH, AIG, and GFA. C181 (acyl-thioester intermediate) is an active-site residue.

Belongs to the LipB family.

The protein localises to the cytoplasm. The enzyme catalyses octanoyl-[ACP] + L-lysyl-[protein] = N(6)-octanoyl-L-lysyl-[protein] + holo-[ACP] + H(+). Its pathway is protein modification; protein lipoylation via endogenous pathway; protein N(6)-(lipoyl)lysine from octanoyl-[acyl-carrier-protein]: step 1/2. In terms of biological role, catalyzes the transfer of endogenously produced octanoic acid from octanoyl-acyl-carrier-protein onto the lipoyl domains of lipoate-dependent enzymes. Lipoyl-ACP can also act as a substrate although octanoyl-ACP is likely to be the physiological substrate. The protein is Octanoyltransferase of Mycobacterium sp. (strain JLS).